The primary structure comprises 714 residues: Fumarate reductase flavoprotein subunit (714 aa).

FAD is bound by residues 13–16 (GGLA), 42–44 (SHS), and 49–50 (GG). His43 is subject to Tele-8alpha-FAD histidine. Active-site residues include His257 and Arg273. Residues Glu420 and 436–437 (SV) each bind FAD.

This sequence belongs to the FAD-dependent oxidoreductase 2 family. FRD/SDH subfamily. Part of an enzyme complex containing three subunits: a flavoprotein (frdA), an iron-sulfur protein (frdB), and diheme cytochrome b (frdC). FAD is required as a cofactor.

It localises to the cell inner membrane. The catalysed reaction is a quinone + succinate = fumarate + a quinol. Its function is as follows. The fumarate reductase enzyme complex is required for fumarate respiration. In Helicobacter pylori (strain J99 / ATCC 700824) (Campylobacter pylori J99), this protein is Fumarate reductase flavoprotein subunit (frdA).